The chain runs to 434 residues: MQKADFIDRIVIYVKGGKGGDGSASFRHEKYVPKGGPDGGDGGNGGYVFLKANPNLSTLLSVSEKKKYIAENGENGKGKKMHGRNGKDVVIDVPVGTVVKDFETGEIIADLDKPGMVVCVARGGKGGRGNVHFKSSTMRAPKISERGFEGEERKLVLELKLLADVGLVGYPNVGKSSFISKISNARPKIANYPFTTTIPNLGVVTVNELQFVVADIPGLIKGASKGAGLGNVFLRHVERCSVIAHIVDISGMEGRDPVQDYFDIRNELEHFSSELAQKEEIIIANKIDLISKEELEKRLEKLRKETGKQIFPTSIITGEGIEKIVYKLAEIVKESKKFHTQSEVVNEQIKRPKPLWKELPERFNIEIIKEGNDFIVTGTYVEEWAKRLNLNQKDGYRKFMELLEKNGLEKKLKEAGIKDGDTVWVAQRAFEYKE.

Positions 4-162 constitute an Obg domain; it reads ADFIDRIVIY…RKLVLELKLL (159 aa). Residues 163-333 enclose the OBG-type G domain; sequence ADVGLVGYPN…IVYKLAEIVK (171 aa). GTP contacts are provided by residues 169-176, 194-198, 215-218, 285-288, and 314-316; these read GYPNVGKS, FTTTI, DIPG, NKID, and SII. Positions 176 and 196 each coordinate Mg(2+). The OCT domain occupies 355 to 434; sequence LWKELPERFN…VAQRAFEYKE (80 aa).

Belongs to the TRAFAC class OBG-HflX-like GTPase superfamily. OBG GTPase family. As to quaternary structure, monomer. Requires Mg(2+) as cofactor.

The protein resides in the cytoplasm. An essential GTPase which binds GTP, GDP and possibly (p)ppGpp with moderate affinity, with high nucleotide exchange rates and a fairly low GTP hydrolysis rate. Plays a role in control of the cell cycle, stress response, ribosome biogenesis and in those bacteria that undergo differentiation, in morphogenesis control. In Thermosipho africanus (strain TCF52B), this protein is GTPase Obg.